The primary structure comprises 121 residues: Large ribosomal subunit protein uL14c (121 aa).

It belongs to the universal ribosomal protein uL14 family. Part of the 50S ribosomal subunit.

The protein resides in the plastid. It localises to the chloroplast. Functionally, binds to 23S rRNA. This is Large ribosomal subunit protein uL14c from Guillardia theta (Cryptophyte).